Consider the following 217-residue polypeptide: Zinc finger CCHC-type and RNA-binding motif-containing protein 1 (217 aa).

An RRM domain is found at serine 10–aspartate 88. The CCHC-type zinc-finger motif lies at serine 105–lysine 122. The disordered stretch occupies residues cysteine 120–aspartate 217. Residues proline 145–alanine 163 show a composition bias toward acidic residues. Phosphoserine occurs at positions 155, 210, and 216.

In terms of assembly, component of the U11/U12 snRNPs that are part of the U12-type spliceosome. Interacts with ZRSR1. In terms of tissue distribution, expressed at higher level in heart and testis, and at lower level in cerebellum. Weakly expressed at low level in liver.

It localises to the nucleus. It is found in the nucleoplasm. The sequence is that of Zinc finger CCHC-type and RNA-binding motif-containing protein 1 (Zcrb1) from Mus musculus (Mouse).